Here is a 477-residue protein sequence, read N- to C-terminus: Probable cytosol aminopeptidase (477 aa).

K245 and D250 together coordinate Mn(2+). K257 is an active-site residue. Residues D268, D327, and E329 each contribute to the Mn(2+) site. The active site involves R331.

The protein belongs to the peptidase M17 family. The cofactor is Mn(2+).

It localises to the cytoplasm. The catalysed reaction is Release of an N-terminal amino acid, Xaa-|-Yaa-, in which Xaa is preferably Leu, but may be other amino acids including Pro although not Arg or Lys, and Yaa may be Pro. Amino acid amides and methyl esters are also readily hydrolyzed, but rates on arylamides are exceedingly low.. The enzyme catalyses Release of an N-terminal amino acid, preferentially leucine, but not glutamic or aspartic acids.. Presumably involved in the processing and regular turnover of intracellular proteins. Catalyzes the removal of unsubstituted N-terminal amino acids from various peptides. In Exiguobacterium sibiricum (strain DSM 17290 / CCUG 55495 / CIP 109462 / JCM 13490 / 255-15), this protein is Probable cytosol aminopeptidase.